The following is a 975-amino-acid chain: Glycine dehydrogenase (decarboxylating) (975 aa).

At K723 the chain carries N6-(pyridoxal phosphate)lysine.

The protein belongs to the GcvP family. In terms of assembly, the glycine cleavage system is composed of four proteins: P, T, L and H. Requires pyridoxal 5'-phosphate as cofactor.

The enzyme catalyses N(6)-[(R)-lipoyl]-L-lysyl-[glycine-cleavage complex H protein] + glycine + H(+) = N(6)-[(R)-S(8)-aminomethyldihydrolipoyl]-L-lysyl-[glycine-cleavage complex H protein] + CO2. Functionally, the glycine cleavage system catalyzes the degradation of glycine. The P protein binds the alpha-amino group of glycine through its pyridoxal phosphate cofactor; CO(2) is released and the remaining methylamine moiety is then transferred to the lipoamide cofactor of the H protein. In Burkholderia orbicola (strain MC0-3), this protein is Glycine dehydrogenase (decarboxylating).